Here is a 409-residue protein sequence, read N- to C-terminus: Arginine deiminase (409 aa).

The active-site Amidino-cysteine intermediate is the C399.

Belongs to the arginine deiminase family.

The protein localises to the cytoplasm. It catalyses the reaction L-arginine + H2O = L-citrulline + NH4(+). It participates in amino-acid degradation; L-arginine degradation via ADI pathway; carbamoyl phosphate from L-arginine: step 1/2. The sequence is that of Arginine deiminase from Streptococcus sanguinis (strain SK36).